Here is a 1045-residue protein sequence, read N- to C-terminus: Unconventional myosin-Ia (1045 aa).

The Myosin motor domain maps to 11–697 (AAVGDLVMLD…TLFDLEKRRQ (687 aa)). ATP is bound at residue 104–111 (GESGAGKT). Residues 574–596 (VATLMKNLYSKNPNYIRCIKPND) are actin-binding. 3 IQ domains span residues 701 to 727 (AELATLIQKMFRGWCCRKRYQLMRKSQ), 723 to 750 (MRKSQILISAWFRGHMQRNRYKQMKRSV), and 746 to 774 (MKRSVLLLQAYARGWKTRRMYRRYFRSDA). The region spanning 861–1044 (KALYAQSLQQ…RGSHKMEILV (184 aa)) is the TH1 domain.

It belongs to the TRAFAC class myosin-kinesin ATPase superfamily. Myosin family. Intestine.

In terms of biological role, could play an important role in morphogenesis and function of intestinal microvilli. The polypeptide is Unconventional myosin-Ia (MYO1A) (Gallus gallus (Chicken)).